Consider the following 495-residue polypeptide: DUF21 domain-containing protein At4g14230 (495 aa).

Over 1–42 (MHPINAVVAARMLAGISQSNALQSEAIPFGSLEWITYAGISC) the chain is Extracellular. Positions 30-212 (GSLEWITYAG…GKGGELTHDE (183 aa)) constitute a CNNM transmembrane domain. The helical transmembrane segment at 43 to 63 (FLVLFAGIMSGLTLGLMSLGL) threads the bilayer. The Cytoplasmic segment spans residues 64-92 (VELEILQRSGTPKEKKQSAAIFPVVQKQH). A helical transmembrane segment spans residues 93–113 (QLLVTLLLFNALAMEGLPIYL). Residues 114-120 (DKIFNEY) are Extracellular-facing. Residues 121 to 141 (VAIILSVTFVLFVGEVIPQAI) form a helical membrane-spanning segment. Residues 142-146 (CTRYG) are Cytoplasmic-facing. Residues 147–167 (LAVGANLVWLVRILMVLSYPI) traverse the membrane as a helical segment. The Extracellular portion of the chain corresponds to 168–495 (SFPIAKMLDW…TMTGPPQGNN (328 aa)). CBS domains follow at residues 231–291 (MTPI…TGTL), 296–356 (GIRR…NNSE), and 357–426 (LTAP…IVDE). Positions 330-354 (KGKSKGHPSTLHEENSGESNVSSNN) are disordered. N-linked (GlcNAc...) asparagine glycosylation occurs at Asn349. Residue Ser352 is modified to Phosphoserine. Residue Asn353 is glycosylated (N-linked (GlcNAc...) asparagine). The tract at residues 455–495 (SGRRLLGPKGSGGPKTPKASSTPKPDDKLMGTMTGPPQGNN) is disordered. The segment covering 456–477 (GRRLLGPKGSGGPKTPKASSTP) has biased composition (low complexity).

Its subcellular location is the membrane. The polypeptide is DUF21 domain-containing protein At4g14230 (CBSDUF2) (Arabidopsis thaliana (Mouse-ear cress)).